The following is a 326-amino-acid chain: Interleukin-1-binding protein (326 aa).

The N-terminal stretch at 1–18 is a signal peptide; sequence MSIPPVIFLPIFFYSSFV. 3 Ig-like C2-type domains span residues 24 to 115, 122 to 208, and 221 to 322; these read PECI…LNLT, SNID…YDVT, and PPTM…KTVT. Cysteines 48 and 99 form a disulfide. N-linked (GlcNAc...) asparagine; by host glycosylation is found at Asn-80, Asn-103, and Asn-113. A disulfide bridge connects residues Cys-143 and Cys-194. The N-linked (GlcNAc...) asparagine; by host glycan is linked to Asn-237. A disulfide bridge connects residues Cys-242 and Cys-309.

It belongs to the interleukin-1 receptor family. Interacts with mouse Il1b.

The protein localises to the secreted. Its function is as follows. May reduce the host inflammatory response by interacting with inteleukin-1 beta (Il1b) and thus decreasing the association between IL1B and its cellular receptor. This Bos taurus (Bovine) protein is Interleukin-1-binding protein (OPG201).